The sequence spans 335 residues: Tetraacyldisaccharide 4'-kinase (335 aa).

An ATP-binding site is contributed by 58 to 65 (TMGGAGKT).

Belongs to the LpxK family.

The enzyme catalyses a lipid A disaccharide + ATP = a lipid IVA + ADP + H(+). The protein operates within glycolipid biosynthesis; lipid IV(A) biosynthesis; lipid IV(A) from (3R)-3-hydroxytetradecanoyl-[acyl-carrier-protein] and UDP-N-acetyl-alpha-D-glucosamine: step 6/6. In terms of biological role, transfers the gamma-phosphate of ATP to the 4'-position of a tetraacyldisaccharide 1-phosphate intermediate (termed DS-1-P) to form tetraacyldisaccharide 1,4'-bis-phosphate (lipid IVA). The protein is Tetraacyldisaccharide 4'-kinase of Caulobacter vibrioides (strain ATCC 19089 / CIP 103742 / CB 15) (Caulobacter crescentus).